Consider the following 1069-residue polypeptide: ISWI chromatin-remodeling complex ATPase CHR17 (1069 aa).

Basic and acidic residues predominate over residues 1 to 10 (MARASKREVS). Disordered regions lie at residues 1–93 (MARA…KEMQ) and 136–168 (FAKSDPSPSQKKGKGRGRHSSKLTEEEEDEECL). Composition is skewed to acidic residues over residues 15–37 (YSSEEEEQVNDQANVEEDDDELE) and 45–78 (SDEEDVAPDEAPVSDDEVVPVEDDAEEDEEDEEK). A compositionally biased stretch (basic and acidic residues) spans 79–93 (AEISKREKARLKEMQ). The span at 146–156 (KKGKGRGRHSS) shows a compositional bias: basic residues. The Helicase ATP-binding domain maps to 206 to 371 (IRLYENGING…WALLNFLLPE (166 aa)). Residue 219 to 226 (DEMGLGKT) participates in ATP binding. A DEAH box motif is present at residues 322-325 (DEAH). In terms of domain architecture, Helicase C-terminal spans 499-650 (LLDKLLPKLK…ALVIQQGRLA (152 aa)). SANT domains are found at residues 845–897 (EGFS…VRYK) and 946–1007 (QNKG…DTLI). The segment at 1016-1069 (EFDERERQARKEKKLSKSATPSKRPSGRQANESPSSLLKKRKQLSMDDYGKRRK) is disordered. Residues 1032-1051 (KSATPSKRPSGRQANESPSS) are compositionally biased toward polar residues. Residues 1059–1069 (LSMDDYGKRRK) are compositionally biased toward basic and acidic residues.

This sequence belongs to the SNF2/RAD54 helicase family. ISWI subfamily. Interacts with RLT1. Binds to FGT1. As to expression, highly expressed in growing tissues such as inflorescence and flower meristems, young leaves and floral organs. Expressed in roots, rosette and cauline leaves, stems, flowers, inflorescences and siliques.

It localises to the nucleus. Functionally, possesses intrinsic ATP-dependent nucleosome-remodeling activity. Constitutes the catalytic subunit of several complexes capable of forming ordered nucleosome arrays on chromatin. Involved in the formation of nucleosome distribution patterns. Required for the maintenance of the plant vegetative phase. In association with RLT1 or RLT2 may prevent the early activation of the vegetative-to-reproductive transition by regulating key genes that contribute to flower timing, such as FT, SEP1, SEP3, AGL8/FUL, SOC1 and FLC. Necessary to acquire heat stress (HS) memory. The protein is ISWI chromatin-remodeling complex ATPase CHR17 of Arabidopsis thaliana (Mouse-ear cress).